We begin with the raw amino-acid sequence, 162 residues long: Lipoprotein signal peptidase (162 aa).

A run of 3 helical transmembrane segments spans residues 12 to 32, 70 to 90, and 102 to 122; these read WLWLVVVVLIIDLGSKYLILQ, WFFAGIAIGICVILMVMMYRS, and ALIIGGALGNLFDRLWHGFVV. Residues Asp123 and Asp141 contribute to the active site. Residues 137-157 form a helical membrane-spanning segment; it reads FNLADSAICIGAALIVLEGFL.

Belongs to the peptidase A8 family.

The protein localises to the cell inner membrane. It carries out the reaction Release of signal peptides from bacterial membrane prolipoproteins. Hydrolyzes -Xaa-Yaa-Zaa-|-(S,diacylglyceryl)Cys-, in which Xaa is hydrophobic (preferably Leu), and Yaa (Ala or Ser) and Zaa (Gly or Ala) have small, neutral side chains.. It functions in the pathway protein modification; lipoprotein biosynthesis (signal peptide cleavage). Functionally, this protein specifically catalyzes the removal of signal peptides from prolipoproteins. The sequence is that of Lipoprotein signal peptidase from Citrobacter koseri (strain ATCC BAA-895 / CDC 4225-83 / SGSC4696).